An 81-amino-acid polypeptide reads, in one-letter code: Apolipoprotein C-I, acidic form (81 aa).

The first 24 residues, 1 to 24, serve as a signal peptide directing secretion; that stretch reads MRLFLSLLVVVLSIVLEGPTPAQG.

The protein belongs to the apolipoprotein C1 family.

It is found in the secreted. The protein is Apolipoprotein C-I, acidic form (APOC1A) of Cercocebus atys (Sooty mangabey).